The primary structure comprises 338 residues: Large ribosomal subunit protein uL10 (338 aa).

The disordered stretch occupies residues Leu292–Phe338. Over residues Glu308–Glu318 the composition is skewed to basic and acidic residues. Residues Lys319–Ala329 show a composition bias toward acidic residues.

It belongs to the universal ribosomal protein uL10 family. As to quaternary structure, part of the 50S ribosomal subunit. Forms part of the ribosomal stalk which helps the ribosome interact with GTP-bound translation factors. Forms a heptameric L10(L12)2(L12)2(L12)2 complex, where L10 forms an elongated spine to which the L12 dimers bind in a sequential fashion.

Its function is as follows. Forms part of the ribosomal stalk, playing a central role in the interaction of the ribosome with GTP-bound translation factors. This is Large ribosomal subunit protein uL10 from Methanococcus aeolicus (strain ATCC BAA-1280 / DSM 17508 / OCM 812 / Nankai-3).